Here is a 343-residue protein sequence, read N- to C-terminus: 3-dehydroquinate synthase (343 aa).

NAD(+) is bound by residues 86 to 90, 110 to 111, K123, and K132; these read GALLD and TT. E165, H229, and H243 together coordinate Zn(2+).

It belongs to the sugar phosphate cyclases superfamily. Dehydroquinate synthase family. Co(2+) serves as cofactor. It depends on Zn(2+) as a cofactor. NAD(+) is required as a cofactor.

It localises to the cytoplasm. It catalyses the reaction 7-phospho-2-dehydro-3-deoxy-D-arabino-heptonate = 3-dehydroquinate + phosphate. The protein operates within metabolic intermediate biosynthesis; chorismate biosynthesis; chorismate from D-erythrose 4-phosphate and phosphoenolpyruvate: step 2/7. Catalyzes the conversion of 3-deoxy-D-arabino-heptulosonate 7-phosphate (DAHP) to dehydroquinate (DHQ). This chain is 3-dehydroquinate synthase, found in Pyrobaculum islandicum (strain DSM 4184 / JCM 9189 / GEO3).